A 341-amino-acid chain; its full sequence is Phosphoribosylformylglycinamidine cyclo-ligase (341 aa).

This sequence belongs to the AIR synthase family.

It localises to the cytoplasm. It catalyses the reaction 2-formamido-N(1)-(5-O-phospho-beta-D-ribosyl)acetamidine + ATP = 5-amino-1-(5-phospho-beta-D-ribosyl)imidazole + ADP + phosphate + H(+). It participates in purine metabolism; IMP biosynthesis via de novo pathway; 5-amino-1-(5-phospho-D-ribosyl)imidazole from N(2)-formyl-N(1)-(5-phospho-D-ribosyl)glycinamide: step 2/2. This is Phosphoribosylformylglycinamidine cyclo-ligase from Caldicellulosiruptor saccharolyticus (strain ATCC 43494 / DSM 8903 / Tp8T 6331).